We begin with the raw amino-acid sequence, 580 residues long: Threonine--tRNA ligase (580 aa).

A catalytic region spans residues 179–476 (DHRKIGKDLN…LLEQTKGILP (298 aa)). 3 residues coordinate Zn(2+): Cys272, His323, and His453.

This sequence belongs to the class-II aminoacyl-tRNA synthetase family. As to quaternary structure, homodimer. The cofactor is Zn(2+).

The protein resides in the cytoplasm. The enzyme catalyses tRNA(Thr) + L-threonine + ATP = L-threonyl-tRNA(Thr) + AMP + diphosphate + H(+). Catalyzes the attachment of threonine to tRNA(Thr) in a two-step reaction: L-threonine is first activated by ATP to form Thr-AMP and then transferred to the acceptor end of tRNA(Thr). Also edits incorrectly charged L-seryl-tRNA(Thr). In Ureaplasma parvum serovar 3 (strain ATCC 27815 / 27 / NCTC 11736), this protein is Threonine--tRNA ligase.